A 235-amino-acid chain; its full sequence is Nucleoside diphosphate kinase 4, chloroplastic (235 aa).

ATP-binding residues include Lys93, Phe141, Arg169, Thr175, Arg186, and Asn196. Residue His199 is the Pros-phosphohistidine intermediate of the active site.

This sequence belongs to the NDK family. In terms of assembly, homohexamer. Mg(2+) is required as a cofactor.

It localises to the plastid. The protein localises to the chloroplast thylakoid lumen. The enzyme catalyses a 2'-deoxyribonucleoside 5'-diphosphate + ATP = a 2'-deoxyribonucleoside 5'-triphosphate + ADP. The catalysed reaction is a ribonucleoside 5'-diphosphate + ATP = a ribonucleoside 5'-triphosphate + ADP. Major role in the synthesis of nucleoside triphosphates other than ATP. The ATP gamma phosphate is transferred to the NDP beta phosphate via a ping-pong mechanism, using a phosphorylated active-site intermediate. Shows the highest specificity towards GDP. The chain is Nucleoside diphosphate kinase 4, chloroplastic (NDK4) from Spinacia oleracea (Spinach).